The primary structure comprises 1637 residues: Stress response protein NST1 (1637 aa).

Residues 1–17 are compositionally biased toward polar residues; the sequence is MSNRGNLNLNLPPSSGK. Disordered regions lie at residues 1-155, 221-252, 442-494, 504-523, 681-734, 746-825, 871-1036, 1049-1075, 1176-1299, and 1512-1534; these read MSNR…EITN, HQAS…HASH, LKMN…SQQL, KNNL…PLQH, KTPY…EIDD, QHHH…EEEK, AKRE…SKHV, SKQN…EENP, NSSQ…GAII, and YTQQ…QYPL. Over residues 24–33 the composition is skewed to basic and acidic residues; that stretch reads VHFELSKEKN. Composition is skewed to low complexity over residues 34 to 53 and 64 to 113; these read NSTN…SNNT and NDNN…QQQS. The segment covering 124–134 has biased composition (basic residues); that stretch reads AKKRKKKKSKK. The span at 135 to 155 shows a compositional bias: low complexity; sequence SSNNNGNNSNTNSNSNSEITN. Residues 446–470 are compositionally biased toward low complexity; it reads QRQQSQSQSQSQSQQQRDVQTAQSQ. Residues 471–487 show a composition bias toward polar residues; the sequence is VLSKDSSLKNANTSMNK. Residues 692-706 are compositionally biased toward polar residues; it reads PAATSQDREQQVQPN. Positions 717–734 are enriched in basic and acidic residues; sequence DHEHEHEHEHEHEHEIDD. Positions 754–808 are enriched in acidic residues; sequence EEYDEEDEEDDEEYEYGDDEEEEDEEDEEEGEDEELEEVVEDDVDEEILDDEEEF. The stretch at 855-1023 forms a coiled coil; the sequence is KDNTRKLFEE…KQLEKEAAVS (169 aa). Basic and acidic residues-rich tracts occupy residues 871–887 and 896–1021; these read AKRE…EKAK and AKEE…KEAA. The segment covering 1049–1063 has biased composition (polar residues); it reads SKQNQAQNGNQSHLP. Residues 1176 to 1199 show a composition bias toward low complexity; that stretch reads NSSQGSPWTTNSTLSSNLGSTGLS. The segment covering 1201–1228 has biased composition (polar residues); that stretch reads GQGQTVSGVNTNLPSSIGITSGGASQIF. A compositionally biased stretch (low complexity) spans 1234–1257; the sequence is PQLQPHQPQQQQQQQQQQQQQQQQ. Positions 1258 to 1267 are enriched in polar residues; that stretch reads NYFSPFNSFS. Low complexity-rich tracts occupy residues 1282 to 1299 and 1514 to 1534; these read TTNI…GAII and QQQQ…QYPL.

It belongs to the NST1 family.

Its subcellular location is the cytoplasm. In terms of biological role, may act as a negative regulator of salt tolerance. The chain is Stress response protein NST1 (NST1) from Lodderomyces elongisporus (strain ATCC 11503 / CBS 2605 / JCM 1781 / NBRC 1676 / NRRL YB-4239) (Yeast).